The chain runs to 363 residues: Ribonuclease P protein subunit p40 (363 aa).

As to quaternary structure, component of nuclear RNase P and RNase MRP ribonucleoproteins. RNase P consists of a catalytic RNA moiety and about 10 protein subunits; POP1, POP4, POP5, POP7, RPP14, RPP21, RPP25, RPP30, RPP38 and RPP40. Within the RNase P complex, POP1, POP7 and RPP25 form the 'finger' subcomplex, POP5, RPP14, RPP40 and homodimeric RPP30 form the 'palm' subcomplex, and RPP21, POP4 and RPP38 form the 'wrist' subcomplex. All subunits of the RNase P complex interact with the catalytic RNA. Several subunits of RNase P are also part of the RNase MRP complex. RNase MRP consists of a catalytic RNA moiety and about 8 protein subunits; POP1, POP7, RPP25, RPP30, RPP38, RPP40 and possibly also POP4 and POP5.

Its subcellular location is the nucleus. The protein resides in the nucleolus. Its function is as follows. Component of ribonuclease P, a ribonucleoprotein complex that generates mature tRNA molecules by cleaving their 5'-ends. Also a component of the MRP ribonuclease complex, which cleaves pre-rRNA sequences. This is Ribonuclease P protein subunit p40 (RPP40) from Homo sapiens (Human).